The sequence spans 337 residues: tRNA N6-adenosine threonylcarbamoyltransferase (337 aa).

2 residues coordinate Fe cation: His111 and His115. Substrate is bound by residues 134–138, Asp167, Gly180, and Asn272; that span reads LVSGG. Asp300 contacts Fe cation.

This sequence belongs to the KAE1 / TsaD family. The cofactor is Fe(2+).

The protein localises to the cytoplasm. The enzyme catalyses L-threonylcarbamoyladenylate + adenosine(37) in tRNA = N(6)-L-threonylcarbamoyladenosine(37) in tRNA + AMP + H(+). In terms of biological role, required for the formation of a threonylcarbamoyl group on adenosine at position 37 (t(6)A37) in tRNAs that read codons beginning with adenine. Is involved in the transfer of the threonylcarbamoyl moiety of threonylcarbamoyl-AMP (TC-AMP) to the N6 group of A37, together with TsaE and TsaB. TsaD likely plays a direct catalytic role in this reaction. This Salmonella agona (strain SL483) protein is tRNA N6-adenosine threonylcarbamoyltransferase.